Here is an 876-residue protein sequence, read N- to C-terminus: Vacuolar protein sorting-associated protein 39 homolog (876 aa).

A CNH domain is found at 14-310; that stretch reads GVQIESIAAY…KFLVHADKGT (297 aa). One copy of the CHCR repeat lies at 578–741; the sequence is ELIEVESLPR…ILIPPTQPLY (164 aa).

It belongs to the VAM6/VPS39 family. In terms of assembly, part of the homotypic fusion and vacuole protein sorting (HOPS) complex, composed of Vps16A, car/Vps33A, dor/Vps18, Vps39, Vps11 and lt/Vps41. Interacts with Rab2 (GTP-bound form); the interaction is probably direct.

The protein localises to the cytoplasm. It is found in the lysosome membrane. It localises to the late endosome membrane. Its subcellular location is the late endosome. The protein resides in the lysosome. In terms of biological role, part of the homotypic fusion and vacuole protein sorting (HOPS) tethering complex involved in endo-lysosomal vesicle trafficking and lysosome biogenesis. The HOPS complex facilitates docking and fusion of lysosomes with late endosomes and several other types of vesicles. The HOPS complex is also involved in autophagy and crinophagy (the elimination of unused secretory granules through their fusion with lysosomes). The HOPS complex mediates autophagocitic flux, probably by binding autophagosome-associated Syx17/syntaxin 17, promoting assembly of the trans-SNARE complex and instigating autophagosome-lysosome fusion. Independent of Syx17/syntaxin 17, HOPS is involved in biosynthetic transport to lysosomes and lysosome-related organelles such as eye-pigment granules. Required for autophagocytosis-dependent remodeling of myofibrils and transverse-tubules (T-tubules) during metamorphosis. This chain is Vacuolar protein sorting-associated protein 39 homolog, found in Drosophila melanogaster (Fruit fly).